Here is a 200-residue protein sequence, read N- to C-terminus: Elongation factor Ts (200 aa).

Positions 81–84 are involved in Mg(2+) ion dislocation from EF-Tu; the sequence is TDFV.

The protein belongs to the EF-Ts family.

Its subcellular location is the cytoplasm. Functionally, associates with the EF-Tu.GDP complex and induces the exchange of GDP to GTP. It remains bound to the aminoacyl-tRNA.EF-Tu.GTP complex up to the GTP hydrolysis stage on the ribosome. This is Elongation factor Ts from Nitratidesulfovibrio vulgaris (strain DSM 19637 / Miyazaki F) (Desulfovibrio vulgaris).